Reading from the N-terminus, the 335-residue chain is DNA polymerase beta (335 aa).

K41 is covalently cross-linked (Glycyl lysine isopeptide (Lys-Gly) (interchain with G-Cter in ubiquitin)). Residue K60 coordinates K(+). K60 is a binding site for Na(+). A Glycyl lysine isopeptide (Lys-Gly) (interchain with G-Cter in ubiquitin) cross-link involves residue K61. K(+) contacts are provided by L62 and V65. Na(+) contacts are provided by L62 and V65. Residue K72 is the Nucleophile; Schiff-base intermediate with DNA; for 5'-dRP lyase activity of the active site. An N6-acetyllysine modification is found at K72. Residue K81 forms a Glycyl lysine isopeptide (Lys-Gly) (interchain with G-Cter in ubiquitin) linkage. R83 carries the post-translational modification Omega-N-methylarginine; by PRMT6. T101, V103, and I106 together coordinate K(+). Positions 101, 103, and 106 each coordinate Na(+). Position 149 (R149) interacts with dATP. Residue R149 coordinates dCTP. R149 is a binding site for dGTP. Residue R149 coordinates dTTP. R152 carries the post-translational modification Omega-N-methylarginine; by PRMT6. Positions 180, 183, 189, and 190 each coordinate dATP. Residues S180, R183, G189, and D190 each contribute to the dCTP site. DGTP-binding residues include S180, R183, G189, D190, and D192. Residues S180, R183, G189, and D190 each coordinate dTTP. A DNA-binding region spans residues 183–192; the sequence is RGAESSGDMD. Residues D190, D192, and D256 each coordinate Mg(2+).

It belongs to the DNA polymerase type-X family. In terms of assembly, monomer. Binds single-stranded DNA (ssDNA). Interacts with APEX1, LIG1, LIG3, FEN1, PCNA and XRCC1. Interacts with HUWE1/ARF-BP1, STUB1/CHIP and USP47. Interacts with FAM168A. Mg(2+) serves as cofactor. Methylation by PRMT6 stimulates the polymerase activity by enhancing DNA binding and processivity. Post-translationally, ubiquitinated at Lys-41, Lys-61 and Lys-81: monoubiquitinated by HUWE1/ARF-BP1. Monoubiquitinated protein is then the target of STUB1/CHIP, which catalyzes polyubiquitination from monoubiquitin, leading to degradation by the proteasome. USP47 mediates the deubiquitination of monoubiquitinated protein, preventing polyubiquitination by STUB1/CHIP and its subsequent degradation.

It localises to the nucleus. Its subcellular location is the cytoplasm. It carries out the reaction DNA(n) + a 2'-deoxyribonucleoside 5'-triphosphate = DNA(n+1) + diphosphate. The catalysed reaction is a 5'-end 2'-deoxyribose-2'-deoxyribonucleotide-DNA = (2E,4S)-4-hydroxypenten-2-al-5-phosphate + a 5'-end 5'-phospho-2'-deoxyribonucleoside-DNA + H(+). The enzyme catalyses 2'-deoxyribonucleotide-(2'-deoxyribose 5'-phosphate)-2'-deoxyribonucleotide-DNA = a 3'-end 2'-deoxyribonucleotide-(2,3-dehydro-2,3-deoxyribose 5'-phosphate)-DNA + a 5'-end 5'-phospho-2'-deoxyribonucleoside-DNA + H(+). In terms of biological role, repair polymerase that plays a key role in base-excision repair. During this process, the damaged base is excised by specific DNA glycosylases, the DNA backbone is nicked at the abasic site by an apurinic/apyrimidic (AP) endonuclease, and POLB removes 5'-deoxyribose-phosphate from the preincised AP site acting as a 5'-deoxyribose-phosphate lyase (5'-dRP lyase); through its DNA polymerase activity, it adds one nucleotide to the 3' end of the arising single-nucleotide gap. Conducts 'gap-filling' DNA synthesis in a stepwise distributive fashion rather than in a processive fashion as for other DNA polymerases. It is also able to cleave sugar-phosphate bonds 3' to an intact AP site, acting as an AP lyase. The polypeptide is DNA polymerase beta (POLB) (Homo sapiens (Human)).